A 79-amino-acid polypeptide reads, in one-letter code: Small ribosomal subunit protein bS18 (79 aa).

The protein belongs to the bacterial ribosomal protein bS18 family. In terms of assembly, part of the 30S ribosomal subunit. Forms a tight heterodimer with protein bS6.

In terms of biological role, binds as a heterodimer with protein bS6 to the central domain of the 16S rRNA, where it helps stabilize the platform of the 30S subunit. In Streptococcus suis (strain 98HAH33), this protein is Small ribosomal subunit protein bS18.